The primary structure comprises 404 residues: NADH-quinone oxidoreductase subunit D (404 aa).

It belongs to the complex I 49 kDa subunit family. NDH-1 is composed of 14 different subunits. Subunits NuoB, C, D, E, F, and G constitute the peripheral sector of the complex.

The protein resides in the cell inner membrane. The catalysed reaction is a quinone + NADH + 5 H(+)(in) = a quinol + NAD(+) + 4 H(+)(out). NDH-1 shuttles electrons from NADH, via FMN and iron-sulfur (Fe-S) centers, to quinones in the respiratory chain. The immediate electron acceptor for the enzyme in this species is believed to be ubiquinone. Couples the redox reaction to proton translocation (for every two electrons transferred, four hydrogen ions are translocated across the cytoplasmic membrane), and thus conserves the redox energy in a proton gradient. This Leptospira borgpetersenii serovar Hardjo-bovis (strain JB197) protein is NADH-quinone oxidoreductase subunit D.